The chain runs to 409 residues: Elongation factor Tu (409 aa).

A tr-type G domain is found at 10 to 214 (KPHVNVGTIG…AVDSYIPTPE (205 aa)). The G1 stretch occupies residues 19-26 (GHVDHGKT). 19–26 (GHVDHGKT) serves as a coordination point for GTP. Thr-26 lines the Mg(2+) pocket. Positions 60 to 64 (GITIN) are G2. The interval 81–84 (DCPG) is G3. Residues 81–85 (DCPGH) and 136–139 (NKAD) each bind GTP. Residues 136-139 (NKAD) form a G4 region. Positions 174 to 176 (SAL) are G5.

It belongs to the TRAFAC class translation factor GTPase superfamily. Classic translation factor GTPase family. EF-Tu/EF-1A subfamily. In terms of assembly, monomer.

It is found in the cytoplasm. The catalysed reaction is GTP + H2O = GDP + phosphate + H(+). In terms of biological role, GTP hydrolase that promotes the GTP-dependent binding of aminoacyl-tRNA to the A-site of ribosomes during protein biosynthesis. The chain is Elongation factor Tu from Synechococcus sp. (strain JA-2-3B'a(2-13)) (Cyanobacteria bacterium Yellowstone B-Prime).